A 121-amino-acid chain; its full sequence is Protransforming growth factor alpha (121 aa).

Leu-1 is a signal peptide. The propeptide at 2–16 (ENSTSLLSDPPVAAA) is removed in mature form. Residues 2-75 (ENSTSLLSDP…AVVAASQKKQ (74 aa)) are Extracellular-facing. A glycan (N-linked (GlcNAc...) asparagine) is linked at Asn-3. One can recognise an EGF-like domain in the interval 20–60 (HFNDCPDSHTQFCFHGTCRFLVQEDRPACVCHSGYVGARCE). 3 disulfide bridges follow: Cys-24–Cys-37, Cys-32–Cys-48, and Cys-50–Cys-59. A propeptide spans 67-121 (VVAASQKKQAITALVVVSIVALAVLIITCVLIHCCQVRKHCEWCRALICRHEKPS) (removed in mature form). A helical transmembrane segment spans residues 76 to 101 (AITALVVVSIVALAVLIITCVLIHCC).

Interacts with the PDZ domains of MAGI3, SDCBP and SNTA1. The interaction with SDCBP, is required for the targeting to the cell surface. In the endoplasmic reticulum, in its immature form (i.e. with a prosegment and lacking full N-glycosylation), interacts with CNIH. In the Golgi apparatus, may form a complex with CNIH and GORASP2. Interacts (via cytoplasmic C-terminal domain) with NKD2. In terms of tissue distribution, hypothalamus.

It localises to the secreted. The protein localises to the extracellular space. The protein resides in the cell membrane. In terms of biological role, TGF alpha is a mitogenic polypeptide that is able to bind to the EGF receptor/EGFR and to act synergistically with TGF beta to promote anchorage-independent cell proliferation in soft agar. This chain is Protransforming growth factor alpha (TGFA), found in Macaca mulatta (Rhesus macaque).